Reading from the N-terminus, the 102-residue chain is Large ribosomal subunit protein bL21 (102 aa).

It belongs to the bacterial ribosomal protein bL21 family. In terms of assembly, part of the 50S ribosomal subunit. Contacts protein L20.

In terms of biological role, this protein binds to 23S rRNA in the presence of protein L20. This Solidesulfovibrio magneticus (strain ATCC 700980 / DSM 13731 / RS-1) (Desulfovibrio magneticus) protein is Large ribosomal subunit protein bL21.